The primary structure comprises 232 residues: LRRN4 C-terminal-like protein (232 aa).

Positions 1 to 22 are cleaved as a signal peptide; that stretch reads MPHSPCLLWLLAVTSLVPGTQP. Residues 23–189 are Extracellular-facing; that stretch reads LVAGDLEGDE…RLTVPPRPLT (167 aa). Positions 77–172 constitute a Fibronectin type-III domain; it reads PPHPPRLGEV…GAEGLDSADG (96 aa). Asn-127 carries an N-linked (GlcNAc...) asparagine glycan. A helical transmembrane segment spans residues 190–210; sequence LLHAAMGVGSALALLSCSALV. The Cytoplasmic segment spans residues 211–232; the sequence is WHFCLRQRWGCPRRGRPSHAGL.

Its subcellular location is the membrane. The polypeptide is LRRN4 C-terminal-like protein (LRRN4CL) (Bos taurus (Bovine)).